Here is a 385-residue protein sequence, read N- to C-terminus: 8-amino-7-oxononanoate synthase (385 aa).

R21 lines the substrate pocket. Residue 108–109 (GY) coordinates pyridoxal 5'-phosphate. H133 is a substrate binding site. Positions 179, 207, and 233 each coordinate pyridoxal 5'-phosphate. The residue at position 236 (K236) is an N6-(pyridoxal phosphate)lysine. T350 lines the substrate pocket.

It belongs to the class-II pyridoxal-phosphate-dependent aminotransferase family. BioF subfamily. Homodimer. Pyridoxal 5'-phosphate is required as a cofactor.

It catalyses the reaction 6-carboxyhexanoyl-[ACP] + L-alanine + H(+) = (8S)-8-amino-7-oxononanoate + holo-[ACP] + CO2. The protein operates within cofactor biosynthesis; biotin biosynthesis. Catalyzes the decarboxylative condensation of pimeloyl-[acyl-carrier protein] and L-alanine to produce 8-amino-7-oxononanoate (AON), [acyl-carrier protein], and carbon dioxide. The polypeptide is 8-amino-7-oxononanoate synthase (Pectobacterium atrosepticum (strain SCRI 1043 / ATCC BAA-672) (Erwinia carotovora subsp. atroseptica)).